A 605-amino-acid chain; its full sequence is Proline--tRNA ligase (605 aa).

This sequence belongs to the class-II aminoacyl-tRNA synthetase family. ProS type 1 subfamily. Homodimer.

It is found in the cytoplasm. It catalyses the reaction tRNA(Pro) + L-proline + ATP = L-prolyl-tRNA(Pro) + AMP + diphosphate. Functionally, catalyzes the attachment of proline to tRNA(Pro) in a two-step reaction: proline is first activated by ATP to form Pro-AMP and then transferred to the acceptor end of tRNA(Pro). As ProRS can inadvertently accommodate and process non-cognate amino acids such as alanine and cysteine, to avoid such errors it has two additional distinct editing activities against alanine. One activity is designated as 'pretransfer' editing and involves the tRNA(Pro)-independent hydrolysis of activated Ala-AMP. The other activity is designated 'posttransfer' editing and involves deacylation of mischarged Ala-tRNA(Pro). The misacylated Cys-tRNA(Pro) is not edited by ProRS. This Bifidobacterium adolescentis (strain ATCC 15703 / DSM 20083 / NCTC 11814 / E194a) protein is Proline--tRNA ligase.